Consider the following 251-residue polypeptide: Small ribosomal subunit protein uS2 (251 aa).

The protein belongs to the universal ribosomal protein uS2 family.

This Aromatoleum aromaticum (strain DSM 19018 / LMG 30748 / EbN1) (Azoarcus sp. (strain EbN1)) protein is Small ribosomal subunit protein uS2.